The following is an 87-amino-acid chain: UPF0729 protein C18orf32 homolog (87 aa).

It belongs to the UPF0729 family.

The polypeptide is UPF0729 protein C18orf32 homolog (Esox lucius (Northern pike)).